A 627-amino-acid polypeptide reads, in one-letter code: MTRIQDDLFATVNAEWLENAEIPADKPRISAFDELVLKNEKNLAKDLADLSQNLPTDNPELLEAIKFYNKAGDWQTREKADFSAVKNELAKVETLNTFEDFKNNLTQLVFHSQAPLPFSFSVEPDMKDAIHYSLGFSGPGLILPDTTYYNDEHPRKKELLDFWAKNTSEILKTFDVENAEEIAKSALKFDALLVPSANTSEEWAKYAELYHPISTDSFVSKVKNLDLKSLIKDLVKTEPDKVIVYEDRFYESFDSLINEENWSLIKAWMLTKIARGATSFFNEDLRILGGAYGRFLSNVQEARSQEKHQLDLTESYFSQVIGLFYGKKYFGEAAKADVKRMVTAMIKVYQARLSKNEWLSQETAEKAIEKLDAITPFIGFPDKLPEIYSRLKTTSGSLYEDALKFDEILTARTFEKFSEDVDKTSWHMPAHMVNAYYSPDSNTIVFPAAILQAPFYSLEQSSSQNYGGIGTVIAHEISHAFDNNGAQFDKEGNLNKWWLDEDYEAFEEKQKEMIALFDGVETEAGPANGKLIVSENIADQGGITAALTAAKDEKDVDLKAFFSQWAKIWRMKASKEFQQMLLSMDVHAPAKLRANIPPTNLEEFYETFDVKETDKMYRAPENRLKIW.

The Peptidase M13 domain occupies 1–627 (MTRIQDDLFA…RAPENRLKIW (627 aa)). H475 is a Zn(2+) binding site. E476 is a catalytic residue. Positions 479 and 535 each coordinate Zn(2+). D539 functions as the Proton donor in the catalytic mechanism.

This sequence belongs to the peptidase M13 family. In terms of assembly, monomer. It depends on Zn(2+) as a cofactor.

Endopeptidase with broad substrate specificity for several oligopeptides. This is Neutral endopeptidase (pepO) from Lactococcus lactis subsp. lactis (strain IL1403) (Streptococcus lactis).